Consider the following 189-residue polypeptide: Translation initiation factor IF-3 (189 aa).

Belongs to the IF-3 family. In terms of assembly, monomer.

The protein resides in the cytoplasm. In terms of biological role, IF-3 binds to the 30S ribosomal subunit and shifts the equilibrium between 70S ribosomes and their 50S and 30S subunits in favor of the free subunits, thus enhancing the availability of 30S subunits on which protein synthesis initiation begins. In Corynebacterium glutamicum (strain ATCC 13032 / DSM 20300 / JCM 1318 / BCRC 11384 / CCUG 27702 / LMG 3730 / NBRC 12168 / NCIMB 10025 / NRRL B-2784 / 534), this protein is Translation initiation factor IF-3.